Consider the following 731-residue polypeptide: Alpha-catulin (731 aa).

Phosphoserine occurs at positions 373 and 537. A disordered region spans residues 535 to 559; sequence HLSLPKPTKNSANLKSLKPDKPDSE.

The protein belongs to the vinculin/alpha-catenin family. Interacts with ARHGEF1. Interacts with Dtna. The interaction is required for correct localization of both Ctnnal1 and Dtna.

Its subcellular location is the cytoplasm. The protein resides in the cytoskeleton. It is found in the cell membrane. May modulate the Rho pathway signaling by providing a scaffold for the Lbc Rho guanine nucleotide exchange factor (ARHGEF1). The protein is Alpha-catulin (Ctnnal1) of Mus musculus (Mouse).